A 68-amino-acid polypeptide reads, in one-letter code: Disintegrin EMS11A (68 aa).

Residues 1-65 form the Disintegrin domain; it reads NSAHPCCDPV…DCPRNRYKGK (65 aa). 4 disulfides stabilise this stretch: Cys-6-Cys-29, Cys-20-Cys-26, Cys-25-Cys-50, and Cys-38-Cys-57. Residues 42–44 carry the Cell attachment site; atypical (MLD) motif; sequence MLD.

The protein belongs to the disintegrin family. Dimeric disintegrin subfamily. As to quaternary structure, heterodimer; disulfide-linked. Expressed by the venom gland.

It is found in the secreted. In terms of biological role, poor inhibitor of platelet aggregation. The disintegrin inhibits the adhesion of both the alpha-4/beta-1 (ITGA4/ITGB1) and the alpha-5/beta-1 (ITGA5/ITGB1) integrins to VCAM-1 and fibronectin respectively with almost the same degree of specificity. Inhibition on alpha-IIb/beta-3 (ITGA2B/ITGB3) is low. In Echis multisquamatus (Central Asian sand viper), this protein is Disintegrin EMS11A.